Consider the following 131-residue polypeptide: Hypocretin neuropeptide precursor (131 aa).

Gln34 carries the post-translational modification Pyrrolidone carboxylic acid. Intrachain disulfides connect Cys39/Cys45 and Cys40/Cys47. Residue Leu66 is modified to Leucine amide. The disordered stretch occupies residues 104–131 (EPALRPCSGRRCPSEAASSVAPGGRSGV).

The protein belongs to the orexin family.

The protein resides in the rough endoplasmic reticulum. It is found in the cytoplasmic vesicle. The protein localises to the synapse. Its function is as follows. Neuropeptides that play a significant role in the regulation of food intake and sleep-wakefulness, possibly by coordinating the complex behavioral and physiologic responses of these complementary homeostatic functions. A broader role in the homeostatic regulation of energy metabolism, autonomic function, hormonal balance and the regulation of body fluids, is also suggested. Binds to orexin receptors HCRTR1/OX1R and HCRTR2/OX2R with a high affinity. Stimulates food intake. Modulates pituitary luteinizing hormone secretion in an ovarian steroid-dependent manner. Functionally, binds to orexin receptor HCRTR2/OX2R only. Stimulates food intake. Modulates pituitary luteinizing hormone secretion in an ovarian steroid-dependent manner. The protein is Hypocretin neuropeptide precursor (HCRT) of Bos taurus (Bovine).